We begin with the raw amino-acid sequence, 598 residues long: F-box/WD repeat-containing protein 8 (598 aa).

M1 carries the N-acetylmethionine modification. The interval 20–97 is disordered; that stretch reads SQALRRRRRL…PDRDATEPEP (78 aa). Residues 29–44 are compositionally biased toward basic and acidic residues; sequence LEAGERRSPRRPEAGA. Low complexity predominate over residues 51 to 65; it reads GYLGLAQGLLEGAGR. The span at 73–93 shows a compositional bias: basic and acidic residues; it reads RGGDRKDTSSRSRSPPDRDAT. S84 is subject to Phosphoserine. The residue at position 86 (S86) is a Phosphoserine; by MTOR. Residues 113–159 form the F-box domain; it reads PFFDVRLPYELAINIFQYLNRRELGLCAQVSKTWKVIAEDEVLWYRL. 8 WD repeats span residues 201–250, 259–299, 300–340, 341–383, 384–429, 430–475, 476–513, and 514–561; these read AVSE…LESE, QPYV…FEHD, ARIQ…SEFE, VQKL…LHYV, YGQP…SKLG, NALG…SAHQ, LGVS…EVHS, and RHPV…AYEF.

Component of the Cul7-RING(FBXW8) complex consisting of CUL7, RBX1, SKP1 and FBXW8; within the complex interacts with CUL7 and SKP1. Interacts with GLMN isoform 1. Interacts with OBSL1, CUL1, CUL2, CCT6B, PFDN5, CCT2, CCT3, CCT6A, CCT7, VBP1, CCDC8, ARF1, TRIP13, PDCD5 and GORASP1. Interacts with MAP4K1/HPK1 (when autophosphorylated). Associated component of the 3M complex. Interacts with POUF51 (when phosphorylated on 'Ser-347'). In terms of processing, phosphorylation at Ser-86 by mTORC2 promotes FBXW8 stabilization, allowing its translocation to the cytosol in response to insulin. Widely expressed. Expressed at higher level in skeletal muscle, cartilage and lung.

The protein localises to the cytoplasm. It localises to the perinuclear region. Its subcellular location is the golgi apparatus. It is found in the cytosol. It functions in the pathway protein modification; protein ubiquitination. Its function is as follows. Substrate-recognition component of the Cul7-RING(FBXW8) ubiquitin ligase complex, which mediates the ubiquitination and subsequent proteasomal degradation of target proteins. The Cul7-RING(FBXW8) complex mediates ubiquitination and consequent degradation of GORASP1, acting as a component of the ubiquitin ligase pathway that regulates Golgi morphogenesis and dendrite patterning in brain. Mediates ubiquitination and degradation of IRS1 in a mTOR-dependent manner: the Cul7-RING(FBXW8) complex recognizes and binds IRS1 previously phosphorylated by S6 kinase (RPS6KB1 or RPS6KB2). The Cul7-RING(FBXW8) complex also mediates ubiquitination of MAP4K1/HPK1: recognizes and binds autophosphorylated MAP4K1/HPK1, leading to its degradation, thereby affecting cell proliferation and differentiation. The Cul7-RING(FBXW8) complex also mediates ubiquitination of phosphorylated cyclin-D1 (CCND1). The Cul7-RING(FBXW8) complex is however not a major regulator of CCND1 stability during the G1/S transition. Associated component of the 3M complex, suggesting that it mediates some of 3M complex functions. The polypeptide is F-box/WD repeat-containing protein 8 (Fbxw8) (Mus musculus (Mouse)).